A 201-amino-acid polypeptide reads, in one-letter code: Regulator of G-protein signaling 16 (201 aa).

S-palmitoyl cysteine attachment occurs at residues Cys-2 and Cys-12. Residues 64–180 (SFDLLLNSKN…LKSPAYRDLA (117 aa)) form the RGS domain. Tyr-167 is subject to Phosphotyrosine; by EGFR. Tyr-176 bears the Phosphotyrosine mark. Residues 181–201 (AQASATSTSAPSGSPAEPSHT) are disordered.

As to quaternary structure, interacts with GNAI1 and GNAQ. Interacts with GNAI3, GNAI3 and GNAO1. Palmitoylated on Cys-2 and/or Cys-12. Post-translationally, phosphorylated. Phosphorylation at Tyr-167 by EGFR enhances GTPase accelerating (GAP) activity toward GNAI1. In terms of tissue distribution, retinal; also predominantly expressed in the liver and pituitary.

The protein resides in the membrane. Its function is as follows. Regulates G protein-coupled receptor signaling cascades. Inhibits signal transduction by increasing the GTPase activity of G protein alpha subunits, thereby driving them into their inactive GDP-bound form. Plays an important role in the phototransduction cascade by regulating the lifetime and effective concentration of activated transducin alpha. May regulate extra and intracellular mitogenic signals. The protein is Regulator of G-protein signaling 16 (Rgs16) of Mus musculus (Mouse).